Reading from the N-terminus, the 155-residue chain is Mediator of RNA polymerase II transcription subunit 21 (155 aa).

The tract at residues 29–73 (QAPPSVPPGQHRVDTMPEIKGKAASENPQSNPPQPAEPPVPEKIS) is disordered. The span at 39–51 (HRVDTMPEIKGKA) shows a compositional bias: basic and acidic residues. Over residues 58–69 (SNPPQPAEPPVP) the composition is skewed to pro residues. Positions 75–147 (EQFNQDLKEF…EVLLKKVEDK (73 aa)) form a coiled coil.

This sequence belongs to the Mediator complex subunit 21 family. In terms of assembly, component of the Mediator complex.

Its subcellular location is the nucleus. In terms of biological role, component of the Mediator complex, a coactivator involved in the regulated transcription of nearly all RNA polymerase II-dependent genes. Mediator functions as a bridge to convey information from gene-specific regulatory proteins to the basal RNA polymerase II transcription machinery. Mediator is recruited to promoters by direct interactions with regulatory proteins and serves as a scaffold for the assembly of a functional preinitiation complex with RNA polymerase II and the general transcription factors. The polypeptide is Mediator of RNA polymerase II transcription subunit 21 (SRB7) (Phaeosphaeria nodorum (strain SN15 / ATCC MYA-4574 / FGSC 10173) (Glume blotch fungus)).